The chain runs to 394 residues: Phosphoglycerate kinase (394 aa).

Residues D21–N23, R36, H59–R62, R118, and R151 contribute to the substrate site. S183 is subject to Phosphoserine. Residues K201 and G292 each contribute to the ATP site. T299 is modified (phosphothreonine). ATP is bound by residues E323 and G350–S353.

The protein belongs to the phosphoglycerate kinase family. As to quaternary structure, monomer.

Its subcellular location is the cytoplasm. The catalysed reaction is (2R)-3-phosphoglycerate + ATP = (2R)-3-phospho-glyceroyl phosphate + ADP. It functions in the pathway carbohydrate degradation; glycolysis; pyruvate from D-glyceraldehyde 3-phosphate: step 2/5. The sequence is that of Phosphoglycerate kinase from Bacillus cereus (strain Q1).